The chain runs to 476 residues: Aspartyl/glutamyl-tRNA(Asn/Gln) amidotransferase subunit B (476 aa).

It belongs to the GatB/GatE family. GatB subfamily. Heterotrimer of A, B and C subunits.

It carries out the reaction L-glutamyl-tRNA(Gln) + L-glutamine + ATP + H2O = L-glutaminyl-tRNA(Gln) + L-glutamate + ADP + phosphate + H(+). The catalysed reaction is L-aspartyl-tRNA(Asn) + L-glutamine + ATP + H2O = L-asparaginyl-tRNA(Asn) + L-glutamate + ADP + phosphate + 2 H(+). In terms of biological role, allows the formation of correctly charged Asn-tRNA(Asn) or Gln-tRNA(Gln) through the transamidation of misacylated Asp-tRNA(Asn) or Glu-tRNA(Gln) in organisms which lack either or both of asparaginyl-tRNA or glutaminyl-tRNA synthetases. The reaction takes place in the presence of glutamine and ATP through an activated phospho-Asp-tRNA(Asn) or phospho-Glu-tRNA(Gln). The chain is Aspartyl/glutamyl-tRNA(Asn/Gln) amidotransferase subunit B from Lactobacillus johnsonii (strain CNCM I-12250 / La1 / NCC 533).